Here is a 257-residue protein sequence, read N- to C-terminus: MSVAVRVIPCLDVDAGRVVKGVNFADLRDAGDPVELARRYDAEGADELTFLDVTASSGSRETTYDVVRRTAEQVFIPLTVGGGVRSVADVEKLLRAGADKVGVNTAAIARPELIGEIAHRFGAQVLVLSVDARRTLPGEPTTASGFEVTTHGGRRGTGLDAVEWAARAAELGAGEILLNSMDADGTKAGFDLEMLTEVRARVTVPLVASGGAGAVGHFPPAVAAGADAVLAASVFHFGQLTVGEVKDALRAAGSAVR.

Catalysis depends on residues Asp-12 and Asp-131.

The protein belongs to the HisA/HisF family. Heterodimer of HisH and HisF.

The protein localises to the cytoplasm. It carries out the reaction 5-[(5-phospho-1-deoxy-D-ribulos-1-ylimino)methylamino]-1-(5-phospho-beta-D-ribosyl)imidazole-4-carboxamide + L-glutamine = D-erythro-1-(imidazol-4-yl)glycerol 3-phosphate + 5-amino-1-(5-phospho-beta-D-ribosyl)imidazole-4-carboxamide + L-glutamate + H(+). Its pathway is amino-acid biosynthesis; L-histidine biosynthesis; L-histidine from 5-phospho-alpha-D-ribose 1-diphosphate: step 5/9. IGPS catalyzes the conversion of PRFAR and glutamine to IGP, AICAR and glutamate. The HisF subunit catalyzes the cyclization activity that produces IGP and AICAR from PRFAR using the ammonia provided by the HisH subunit. This chain is Imidazole glycerol phosphate synthase subunit HisF, found in Kineococcus radiotolerans (strain ATCC BAA-149 / DSM 14245 / SRS30216).